A 436-amino-acid chain; its full sequence is Antilisterial bacteriocin subtilosin biosynthesis protein AlbD (436 aa).

Transmembrane regions (helical) follow at residues 27–47 (IAAG…QAGI), 51–71 (VLGK…MVFL), 112–132 (TLFF…SGAQ), 134–154 (LFWL…GVML), 166–186 (FLLH…MPAV), 187–207 (TIPL…PVFL), 240–260 (AMLL…FQMM), 270–290 (IYIV…LYSI), 315–335 (FYSG…GFIS), and 395–415 (ATLA…LIIV).

It is found in the cell membrane. Its function is as follows. Involved in the production of the bacteriocin subtilosin. Required for immunity to subtilosin. This is Antilisterial bacteriocin subtilosin biosynthesis protein AlbD (albD) from Bacillus subtilis.